The following is a 417-amino-acid chain: Gamma-glutamyl phosphate reductase (417 aa).

This sequence belongs to the gamma-glutamyl phosphate reductase family.

It localises to the cytoplasm. The catalysed reaction is L-glutamate 5-semialdehyde + phosphate + NADP(+) = L-glutamyl 5-phosphate + NADPH + H(+). Its pathway is amino-acid biosynthesis; L-proline biosynthesis; L-glutamate 5-semialdehyde from L-glutamate: step 2/2. In terms of biological role, catalyzes the NADPH-dependent reduction of L-glutamate 5-phosphate into L-glutamate 5-semialdehyde and phosphate. The product spontaneously undergoes cyclization to form 1-pyrroline-5-carboxylate. The chain is Gamma-glutamyl phosphate reductase from Shigella boydii serotype 18 (strain CDC 3083-94 / BS512).